Here is a 1738-residue protein sequence, read N- to C-terminus: Sodium leak channel NALCN (1738 aa).

Over 1–36 (MLKRKQSSRVEAQPVTDFGPDESLSDNADILWINKP) the chain is Cytoplasmic. The chain crosses the membrane as a helical span at residues 37–57 (WVHSLLRICAIISVIPVCMNT). Residues 58–65 (PMTFEHYP) are Extracellular-facing. The chain crosses the membrane as a helical span at residues 66–90 (PLQYVTFTLDTLLMFLYTAEMIAKM). At 91–106 (HIRGIVKGDSSYVKDR) the chain is on the cytoplasmic side. The chain crosses the membrane as a helical span at residues 107-129 (WCVFDGFMVFCLWVSLVLQVFEI). Topologically, residues 130-137 (ADIVDQMS) are extracellular. A helical; Voltage-sensor membrane pass occupies residues 138–158 (PWGMLRIPRPLIMIRAFRIYF). At 159–173 (RFELPRTRITNILKR) the chain is on the cytoplasmic side. The chain crosses the membrane as a helical span at residues 174–199 (SGEQIWSVSIFLLFFLLLYGILGVQM). At 200 to 269 (FGTFTYHCVV…YSGFNEIGTS (70 aa)) the chain is on the extracellular side. Disulfide bonds link Cys207–Cys239 and Cys229–Cys245. Asn210 and Asn216 each carry an N-linked (GlcNAc...) asparagine glycan. The segment at residues 270-289 (IFTVYEASSQEGWVFLMYRA) is an intramembrane region (pore-forming). The Extracellular portion of the chain corresponds to 290-294 (IDSFP). Residues 295-322 (RWRSYFYFITLIFFLAWLVKNVFIAVII) traverse the membrane as a helical segment. The Cytoplasmic segment spans residues 323–382 (ETFAEIRVQFQQMWGTRSSTTSTATTQMFHEDAAGGWQLVAVDVNKPQGRAPACLQKMMR). The helical transmembrane segment at 383-403 (SSVFHMFILSMVTVDVIVAAS) threads the bilayer. Topologically, residues 404-416 (NYYKGENFRRQYD) are extracellular. Residues 417-439 (EFYLAEVAFTVLFDLEALLKIWC) form a helical membrane-spanning segment. Topologically, residues 440–447 (LGFTGYIS) are cytoplasmic. The helical transmembrane segment at 448–468 (SSLHKFELLLVIGTTLHVYPD) threads the bilayer. At 469–472 (LYHS) the chain is on the extracellular side. The chain crosses the membrane as a helical; Voltage-sensor span at residues 473–492 (QFTYFQVLRVVRLIKISPAL). Over 493–502 (EDFVYKIFGP) the chain is Cytoplasmic. The helical transmembrane segment at 503 to 530 (GKKLGSLVVFTASLLIVMSAISLQMFCF) threads the bilayer. Topologically, residues 531 to 543 (VEELDRFTTFPRA) are extracellular. An intramembrane region (pore-forming) is located at residues 544-563 (FMSMFQILTQEGWVDVMDQT). The Extracellular segment spans residues 564-569 (LNAVGH). Residues 570 to 599 (MWAPLVAIYFILYHLFATLILLSLFVAVIL) form a helical membrane-spanning segment. Over 600–886 (DNLELDEDLK…QLYDLLGLVT (287 aa)) the chain is Cytoplasmic. The segment at 762 to 789 (QERRSLRHGSNSQRISRGKSLETLTQDH) is disordered. The stretch at 795–830 (YRNAQREDSEIKMIQEKKEQAEMKRKVQEEELRENH) forms a coiled coil. The helical transmembrane segment at 887–906 (YLDWVMITVTICSCISMMFE) threads the bilayer. At 907-915 (SPFRRVMHA) the chain is on the extracellular side. A helical membrane pass occupies residues 916-939 (PTLQIAEYVFVIFMSIELNLKIMA). Topologically, residues 940–947 (DGLFFTPT) are cytoplasmic. A helical membrane pass occupies residues 948-972 (AVIRDFGGVMDIFIYLVSLIFLCWM). The Extracellular segment spans residues 973 to 980 (PQNVPAES). A helical; Voltage-sensor membrane pass occupies residues 981-1003 (GAQLLMVLRCLRPLRIFKLVPQM). Topologically, residues 1004-1015 (RKVVRELFSGFK) are cytoplasmic. A helical membrane pass occupies residues 1016-1039 (EIFLVSILLLTLMLVFASFGVQLF). At 1040–1104 (AGKLAKCNDP…NFNFDNVGNA (65 aa)) the chain is on the extracellular side. Residues Cys1046 and Cys1057 are joined by a disulfide bond. Asn1064 carries an N-linked (GlcNAc...) asparagine glycan. The segment at residues 1105 to 1124 (MLALFEVLSLKGWVEVRDVI) is an intramembrane region (pore-forming). The Extracellular segment spans residues 1125-1129 (IHRVG). Residues 1130-1159 (PIHGIYIHVFVFLGCMIGLTLFVGVVIANF) traverse the membrane as a helical segment. The Cytoplasmic portion of the chain corresponds to 1160 to 1210 (NENKGTALLTVDQRRWEDLKSRLKIAQPLHLPPRPDNDGFRAKMYDITQHP). The helical transmembrane segment at 1211–1227 (FFKRTIALLVLAQSVLL) threads the bilayer. Topologically, residues 1228–1236 (SVKWDVEDP) are extracellular. Residues 1237-1260 (VTVPLATMSVVFTFIFVLEVTMKI) form a helical membrane-spanning segment. At 1261-1271 (IAMSPAGFWQS) the chain is on the cytoplasmic side. The chain crosses the membrane as a helical span at residues 1272-1293 (RRNRYDLLVTSLGVVWVVLHFA). At 1294–1296 (LLN) the chain is on the extracellular side. A helical; Voltage-sensor membrane pass occupies residues 1297–1318 (AYTYMMGACVIVFRFFSICGKH). Residues 1319–1331 (VTLKMLLLTVVVS) are Cytoplasmic-facing. Residues 1332 to 1357 (MYKSFFIIVGMFLLLLCYAFAGVVLF) traverse the membrane as a helical segment. Residues 1358–1378 (GTVKYGENINRHANFSSAGKA) are Extracellular-facing. Positions 1379–1398 (ITVLFRIVTGEDWNKIMHDC) form an intramembrane region, pore-forming. The Extracellular portion of the chain corresponds to 1399–1420 (MVQPPFCTPDEFTYWATDCGNY). Cys1405 and Cys1417 are joined by a disulfide. A helical membrane pass occupies residues 1421-1447 (AGALMYFCSFYVIIAYIMLNLLVAIIV). At 1448–1738 (ENFSLFYSTE…DESGDDLLDI (291 aa)) the chain is on the cytoplasmic side. Residues 1611-1679 (PPSIETTQPS…WRLPSAPKPI (69 aa)) are disordered. Residues 1613-1631 (SIETTQPSEDTNANSQDHN) show a composition bias toward polar residues. Low complexity predominate over residues 1633–1648 (QPESSSQQQLLSPTLS).

This sequence belongs to the NALCN family. As to quaternary structure, found in a complex with NALCN, UNC79, UNC80 and NACL1; these auxiliary subunits are indispensable for the function of NALCN channel. Interacts with UNC80; required for the NALCN activation/inhibition by GPCRs in neurons. Found in a complex with NALCN, UNC79 and UNC80; UNC80 bridges NALCN to UNC79. Interacts with CHRM3. Post-translationally, phosphorylated on tyrosine residues. As to expression, predominantly expressed in the brain, moderately in the heart and weakly in the pancreas.

The protein resides in the cell membrane. It carries out the reaction Na(+)(in) = Na(+)(out). Its activity is regulated as follows. Inhibited by low micromolar concentrations of Gd(3+) and high micromolar concentrations of verapamil. Insensitive to tetrodotoxin (TTX) and potentiated by low external Ca(2+) concentration. Functionally, voltage-gated ion channel responsible for the resting Na(+) permeability that controls neuronal excitability. NALCN channel functions as a multi-protein complex, which consists at least of NALCN, NALF1, UNC79 and UNC80. NALCN is the voltage-sensing, pore-forming subunit of the NALCN channel complex. NALCN channel complex is constitutively active and conducts monovalent cations but is blocked by physiological concentrations of extracellular divalent cations. In addition to its role in regulating neuronal excitability, is required for normal respiratory rhythm, systemic osmoregulation by controlling the serum sodium concentration and in the regulation of the intestinal pace-making activity in the interstitial cells of Cajal. NALCN channel is also activated by neuropeptides such as neurotensin and substance P (SP) through a SRC family kinases-dependent pathway. In addition, NALCN activity is enhanced/modulated by several GPCRs, such as CHRM3. This chain is Sodium leak channel NALCN (Nalcn), found in Rattus norvegicus (Rat).